A 166-amino-acid chain; its full sequence is Crossover junction endodeoxyribonuclease RuvC (166 aa).

Catalysis depends on residues Asp-7, Glu-67, and Asp-140. Mg(2+)-binding residues include Asp-7, Glu-67, and Asp-140.

This sequence belongs to the RuvC family. As to quaternary structure, homodimer which binds Holliday junction (HJ) DNA. The HJ becomes 2-fold symmetrical on binding to RuvC with unstacked arms; it has a different conformation from HJ DNA in complex with RuvA. In the full resolvosome a probable DNA-RuvA(4)-RuvB(12)-RuvC(2) complex forms which resolves the HJ. Mg(2+) is required as a cofactor.

The protein localises to the cytoplasm. It carries out the reaction Endonucleolytic cleavage at a junction such as a reciprocal single-stranded crossover between two homologous DNA duplexes (Holliday junction).. Its function is as follows. The RuvA-RuvB-RuvC complex processes Holliday junction (HJ) DNA during genetic recombination and DNA repair. Endonuclease that resolves HJ intermediates. Cleaves cruciform DNA by making single-stranded nicks across the HJ at symmetrical positions within the homologous arms, yielding a 5'-phosphate and a 3'-hydroxyl group; requires a central core of homology in the junction. The consensus cleavage sequence is 5'-(A/T)TT(C/G)-3'. Cleavage occurs on the 3'-side of the TT dinucleotide at the point of strand exchange. HJ branch migration catalyzed by RuvA-RuvB allows RuvC to scan DNA until it finds its consensus sequence, where it cleaves and resolves the cruciform DNA. The sequence is that of Crossover junction endodeoxyribonuclease RuvC from Ruminiclostridium cellulolyticum (strain ATCC 35319 / DSM 5812 / JCM 6584 / H10) (Clostridium cellulolyticum).